Here is a 540-residue protein sequence, read N- to C-terminus: Fumonisin B1 esterase (540 aa).

Catalysis depends on serine 240, which acts as the Acyl-ester intermediate. Catalysis depends on charge relay system residues glutamate 356 and histidine 448. A disordered region spans residues 521-540; sequence QVGSGEGLGVSPSKACQPSK.

This sequence belongs to the type-B carboxylesterase/lipase family.

It catalyses the reaction fumonisin B1 + 2 H2O = 2 tricarballylate + (2S,3S,5R,10R,12S,14S,15R,16R)-2-amino-12,16-dimethylicosane-3,5,10,14,15-pentol + 2 H(+). Functionally, involved in degradation of fumonisin B1. Catalyzes the hydrolysis of fumonisin B1 (FB1) to aminopentol (HFB1). The protein is Fumonisin B1 esterase (fumD) of Sphingopyxis macrogoltabida (Sphingomonas macrogoltabidus).